The following is a 560-amino-acid chain: Nitrite reductase (560 aa).

A signal peptide spans 1-26; that stretch reads MSNVGKPILAGLIAGLSLLGLAVAQA. Residues 27–29 are N-terminal tail; sequence AAP. The region spanning 30–126 is the Cytochrome c domain; the sequence is EMTAEEKEAS…ARYIQHTPDI (97 aa). Residues Cys-47, Cys-50, and His-51 each coordinate heme c. Residues 61 to 80 are disordered; it reads KNLEPHWSKTEADGKKTEGG. Residues 63 to 78 are compositionally biased toward basic and acidic residues; sequence LEPHWSKTEADGKKTE. The heme c site is built by Thr-97 and Met-101. Positions 127 to 560 are D1-heme domain; sequence PPEFSLQDMK…NVFNTMNDVY (434 aa). Heme d1-binding residues include His-193, Arg-236, Ser-237, Tyr-256, Arg-382, and Gln-500.

In terms of assembly, homodimer in solution. Requires heme c as cofactor. Heme serves as cofactor.

It localises to the periplasm. It carries out the reaction nitric oxide + Fe(III)-[cytochrome c] + H2O = Fe(II)-[cytochrome c] + nitrite + 2 H(+). It catalyses the reaction A + NH4(+) + H2O = hydroxylamine + AH2 + H(+). This is Nitrite reductase (nirS) from Stutzerimonas stutzeri (Pseudomonas stutzeri).